Here is a 356-residue protein sequence, read N- to C-terminus: Phosphate acyltransferase (356 aa).

This sequence belongs to the PlsX family. As to quaternary structure, homodimer. Probably interacts with PlsY.

It is found in the cytoplasm. It carries out the reaction a fatty acyl-[ACP] + phosphate = an acyl phosphate + holo-[ACP]. It participates in lipid metabolism; phospholipid metabolism. Catalyzes the reversible formation of acyl-phosphate (acyl-PO(4)) from acyl-[acyl-carrier-protein] (acyl-ACP). This enzyme utilizes acyl-ACP as fatty acyl donor, but not acyl-CoA. This chain is Phosphate acyltransferase, found in Escherichia coli (strain K12 / DH10B).